The primary structure comprises 649 residues: Cysteine-rich receptor-like protein kinase 2 (649 aa).

An N-terminal signal peptide occupies residues 1 to 29; sequence MKKEPVHILPLYLPCLLMFLLSSLRQITG. Residues 30-258 are Extracellular-facing; the sequence is DARARAVKVT…IPRNGRSRGS (229 aa). 2 consecutive Gnk2-homologous domains span residues 33-134 and 139-245; these read ARAV…NYSF and KGPE…DQDF. Asn47, Asn131, Asn149, Asn154, and Asn214 each carry an N-linked (GlcNAc...) asparagine glycan. A helical transmembrane segment spans residues 259-279; it reads VVVIVVSVLSSVVVFMIGVAV. Topologically, residues 280–649 are cytoplasmic; that stretch reads SVYICKRRTI…TVSQSSFYGR (370 aa). In terms of domain architecture, Protein kinase spans 325–608; sequence FDNANKLGQG…HMLKNKEEVL (284 aa). Residues 331 to 339 and Lys353 each bind ATP; that span reads LGQGGFGTV. Tyr398 carries the post-translational modification Phosphotyrosine. Residue Asp450 is the Proton acceptor of the active site. Ser454 and Ser483 each carry phosphoserine. Thr484 and Thr489 each carry phosphothreonine. Tyr497 is subject to Phosphotyrosine.

This sequence belongs to the protein kinase superfamily. Ser/Thr protein kinase family. CRK subfamily.

Its subcellular location is the membrane. It carries out the reaction L-seryl-[protein] + ATP = O-phospho-L-seryl-[protein] + ADP + H(+). The catalysed reaction is L-threonyl-[protein] + ATP = O-phospho-L-threonyl-[protein] + ADP + H(+). The polypeptide is Cysteine-rich receptor-like protein kinase 2 (CRK2) (Arabidopsis thaliana (Mouse-ear cress)).